A 551-amino-acid polypeptide reads, in one-letter code: Arginine--tRNA ligase (551 aa).

The short motif at 123 to 133 (ANPTGPLTIGR) is the 'HIGH' region element.

It belongs to the class-I aminoacyl-tRNA synthetase family. As to quaternary structure, monomer.

The protein resides in the cytoplasm. The catalysed reaction is tRNA(Arg) + L-arginine + ATP = L-arginyl-tRNA(Arg) + AMP + diphosphate. In Chlorobaculum parvum (strain DSM 263 / NCIMB 8327) (Chlorobium vibrioforme subsp. thiosulfatophilum), this protein is Arginine--tRNA ligase.